Reading from the N-terminus, the 285-residue chain is Formate channel FocA (285 aa).

The Cytoplasmic portion of the chain corresponds to 1–30 (MKADNPFDLLLPAAMAKVAEEAGVYKATKH). The helical transmembrane segment at 31–56 (PLKTFYLAITAGVFISIAFVFYITAT) threads the bilayer. At 57 to 64 (TGTGTMPF) the chain is on the periplasmic side. The helical transmembrane segment at 65 to 85 (GMAKLVGGICFSLGLILCVVC) threads the bilayer. The Cytoplasmic portion of the chain corresponds to 86–112 (GADLFTSTVLIVVAKASGRITWGQLAK). A helical membrane pass occupies residues 113–135 (NWLNVYFGNLVGALLFVLLMWLS). Topologically, residues 136–160 (GEYMTANGQWGLNVLQTADHKVHHT) are periplasmic. A helical membrane pass occupies residues 161–181 (FIEAVCLGILANLMVCLAVWM). Residues 182-187 (SYSGRS) lie on the Cytoplasmic side of the membrane. A helical transmembrane segment spans residues 188-205 (LMDKAFIMVLPVAMFVAS). The Periplasmic portion of the chain corresponds to 206–249 (GFEHSIANMFMIPMGIVIRDFASPEFWTAVGSAPENFSHLTVMN). Residues 250–276 (FITDNLIPVTIGNIIGGGLLVGLTYWV) traverse the membrane as a helical segment. The Cytoplasmic portion of the chain corresponds to 277 to 285 (IYLRENDHH).

This sequence belongs to the FNT transporter (TC 1.A.16) family. Homopentamer.

It localises to the cell inner membrane. The enzyme catalyses formate(in) = formate(out). Its function is as follows. Involved in the bidirectional transport of formate during mixed-acid fermentation. Functions to maintain relatively constant intracellular formate levels during growth, using different mechanisms for efflux and uptake of the anion. Is impermeable to water. The polypeptide is Formate channel FocA (Escherichia coli O157:H7).